Consider the following 39-residue polypeptide: Photosystem II reaction center protein J (39 aa).

A helical membrane pass occupies residues 9 to 29 (LWLVGLVGGFAVITIVSLFIY).

It belongs to the PsbJ family. In terms of assembly, PSII is composed of 1 copy each of membrane proteins PsbA, PsbB, PsbC, PsbD, PsbE, PsbF, PsbH, PsbI, PsbJ, PsbK, PsbL, PsbM, PsbT, PsbX, PsbY, PsbZ, Psb30/Ycf12, at least 3 peripheral proteins of the oxygen-evolving complex and a large number of cofactors. It forms dimeric complexes.

It localises to the plastid. The protein resides in the chloroplast thylakoid membrane. Its function is as follows. One of the components of the core complex of photosystem II (PSII). PSII is a light-driven water:plastoquinone oxidoreductase that uses light energy to abstract electrons from H(2)O, generating O(2) and a proton gradient subsequently used for ATP formation. It consists of a core antenna complex that captures photons, and an electron transfer chain that converts photonic excitation into a charge separation. The protein is Photosystem II reaction center protein J of Thalassiosira pseudonana (Marine diatom).